A 272-amino-acid polypeptide reads, in one-letter code: HTH-type transcriptional repressor AllR (272 aa).

Residues 1-20 (MTEVRRRGRPGQQEPSAQKG) form a disordered region. An HTH iclR-type domain is found at 21–83 (AQALERGIAI…SQLGWWHIGL (63 aa)). Positions 43–62 (VSDISLNLDLPLSTTFRLLK) form a DNA-binding region, H-T-H motif. The IclR-ED domain occupies 98 to 267 (VLSVGGPFMR…ARNISTALGL (170 aa)). Residues 154 to 156 (SGA), Asp-207, Cys-217, and 234 to 236 (SIS) each bind glyoxylate.

Functionally, negative regulator of allantoin and glyoxylate utilization operons. Binds to the gcl promoter and to the allS-allA intergenic region. This chain is HTH-type transcriptional repressor AllR (allR), found in Klebsiella pneumoniae.